The sequence spans 804 residues: E3 ubiquitin-protein ligase RNF10 (804 aa).

Composition is skewed to low complexity over residues 1–31, 78–90, and 104–113; these read MPQS…SGSS, SNQS…QKSK, and SKPFSSSSNG. The tract at residues 1–134 is disordered; that stretch reads MPQSSPSAAA…AEFSPAQFSG (134 aa). The residue at position 5 (S5) is a Phosphoserine. The residue at position 110 (S110) is a Phosphoserine. Basic and acidic residues predominate over residues 114-124; that stretch reads GRRDEVAEAQR. S128 bears the Phosphoserine mark. The RING-type zinc finger occupies 225-267; that stretch reads CPICLYPPTAAKITRCGHIFCWACILHYLSLSEKTWSKCPICY. Disordered regions lie at residues 589–611, 646–665, and 715–804; these read DIEK…ERRI, DSAL…LSPL, and KADG…VHTK. Basic and acidic residues predominate over residues 601-611; it reads AREERRRERRI. Polar residues predominate over residues 646 to 655; that stretch reads DSALGPTSTE. The segment covering 715–729 has biased composition (basic and acidic residues); that stretch reads KADGWPKTAPKKDDN. The segment covering 795–804 has biased composition (polar residues); it reads LFSTSVVHTK.

It belongs to the RNF10 family. Interacts with MEOX2.

It is found in the cytoplasm. Its subcellular location is the nucleus. It carries out the reaction S-ubiquitinyl-[E2 ubiquitin-conjugating enzyme]-L-cysteine + [acceptor protein]-L-lysine = [E2 ubiquitin-conjugating enzyme]-L-cysteine + N(6)-ubiquitinyl-[acceptor protein]-L-lysine.. The protein operates within protein modification; protein ubiquitination. Functionally, E3 ubiquitin-protein ligase that catalyzes monoubiquitination of 40S ribosomal proteins RPS2/us5 and RPS3/us3 in response to ribosome stalling. Part of a ribosome quality control that takes place when ribosomes have stalled during translation initiation (iRQC): RNF10 acts by mediating monoubiquitination of RPS2/us5 and RPS3/us3, promoting their degradation by the proteasome. Also promotes ubiquitination of 40S ribosomal proteins in response to ribosome stalling during translation elongation. The action of RNF10 in iRQC is counteracted by USP10. May also act as a transcriptional factor involved in the regulation of MAG (Myelin-associated glycoprotein) expression. Acts as a regulator of Schwann cell differentiation and myelination. This is E3 ubiquitin-protein ligase RNF10 from Mus musculus (Mouse).